The following is a 316-amino-acid chain: MANNEESRGLKSLFDWFANRRKAGATNPERQEREIADGLWHKCSKCGVLTYTKDLRANQMVCVECGHHNRVDSDERIRQLIDQNTWRPMDENLRATDPLQFRDRKAYSDRLREMEDKLGLLDAVKTGLGQINSSPVALAVMDFRFMGGSMGSVVGEKITRLIEQATQRRYPVVIICTSGGARMQEGMLSLMQMAKISAALERHRDARLLYIPVLTNPTTGGVTASFAMLGDIILAEPKATIGFAGRRVIEQTLREKLPDDFQTAEDLLKHGFVDDIVPRTQLKNTLSQLIALHQPVPTTPPMVLWETMSLSSTAAE.

Residues 39–308 (LWHKCSKCGV…TPPMVLWETM (270 aa)) form the CoA carboxyltransferase N-terminal domain. Zn(2+) is bound by residues Cys43, Cys46, Cys62, and Cys65. The C4-type zinc finger occupies 43-65 (CSKCGVLTYTKDLRANQMVCVEC).

This sequence belongs to the AccD/PCCB family. As to quaternary structure, acetyl-CoA carboxylase is a heterohexamer composed of biotin carboxyl carrier protein (AccB), biotin carboxylase (AccC) and two subunits each of ACCase subunit alpha (AccA) and ACCase subunit beta (AccD). Zn(2+) is required as a cofactor.

The protein resides in the cytoplasm. The catalysed reaction is N(6)-carboxybiotinyl-L-lysyl-[protein] + acetyl-CoA = N(6)-biotinyl-L-lysyl-[protein] + malonyl-CoA. It participates in lipid metabolism; malonyl-CoA biosynthesis; malonyl-CoA from acetyl-CoA: step 1/1. Its function is as follows. Component of the acetyl coenzyme A carboxylase (ACC) complex. Biotin carboxylase (BC) catalyzes the carboxylation of biotin on its carrier protein (BCCP) and then the CO(2) group is transferred by the transcarboxylase to acetyl-CoA to form malonyl-CoA. The protein is Acetyl-coenzyme A carboxylase carboxyl transferase subunit beta of Trichormus variabilis (strain ATCC 29413 / PCC 7937) (Anabaena variabilis).